The sequence spans 500 residues: Toluene-4-monooxygenase system, hydroxylase component subunit alpha (500 aa).

The Fe cation site is built by glutamate 104, glutamate 134, histidine 137, glutamate 197, glutamate 231, and histidine 234.

The protein belongs to the TmoA/XamoA family. In terms of assembly, the alkene monooxygenase multicomponent enzyme system is composed of an electron transfer component and a monooxygenase component interacting with the effector protein TmoD. The electron transfer component is composed of a ferredoxin reductase (TmoF) and a ferredoxin (TmoC), and the monooxygenase component is formed by a heterohexamer (dimer of heterotrimers) of two alpha subunits (TmoA), two beta subunits (TmoE) and two gamma subunits (TmoB). Fe(2+) serves as cofactor.

The catalysed reaction is toluene + NADH + O2 + H(+) = 4-methylphenol + NAD(+) + H2O. Its pathway is xenobiotic degradation; toluene degradation. Its activity is regulated as follows. Inhibited by Zn(2+) and Cu(2+). In terms of biological role, component of the toluene-4-monooxygenase multicomponent enzyme system which catalyzes the O2- and NADH-dependent hydroxylation of toluene to form p-cresol. Also able to convert benzene to phenol, catechol, and 1,2,3-trihydroxybenzene by successive hydroxylations. This is Toluene-4-monooxygenase system, hydroxylase component subunit alpha from Ectopseudomonas mendocina (Pseudomonas mendocina).